A 484-amino-acid chain; its full sequence is ATP synthase subunit beta (484 aa).

Residue 168-175 (GGAGVGKT) coordinates ATP.

This sequence belongs to the ATPase alpha/beta chains family. In terms of assembly, F-type ATPases have 2 components, CF(1) - the catalytic core - and CF(0) - the membrane proton channel. CF(1) has five subunits: alpha(3), beta(3), gamma(1), delta(1), epsilon(1). CF(0) has three main subunits: a(1), b(2) and c(9-12). The alpha and beta chains form an alternating ring which encloses part of the gamma chain. CF(1) is attached to CF(0) by a central stalk formed by the gamma and epsilon chains, while a peripheral stalk is formed by the delta and b chains.

It localises to the cell membrane. It carries out the reaction ATP + H2O + 4 H(+)(in) = ADP + phosphate + 5 H(+)(out). Its function is as follows. Produces ATP from ADP in the presence of a proton gradient across the membrane. The catalytic sites are hosted primarily by the beta subunits. The sequence is that of ATP synthase subunit beta from Arthrobacter sp. (strain FB24).